Consider the following 576-residue polypeptide: MAGUK p55 subfamily member 7 (576 aa).

2 L27 domains span residues 10–63 (SDTG…YEKE) and 65–122 (PMPV…YDPV). The 82-residue stretch at 139–220 (IIRLVKNREP…AITFKIIPSI (82 aa)) folds into the PDZ domain. Positions 228-298 (DGKMFVKALF…PSKQFQERRF (71 aa)) constitute an SH3 domain. The Guanylate kinase-like domain maps to 368 to 560 (YRLVILVGPV…AYNELRSTLE (193 aa)).

Belongs to the MAGUK family.

The protein resides in the membrane. It localises to the cell junction. It is found in the tight junction. The protein localises to the adherens junction. Its function is as follows. Acts as an important adapter that promotes epithelial cell polarity and tight junction formation. Involved in the assembly of protein complexes at sites of cell-cell contact. The chain is MAGUK p55 subfamily member 7 (mpp7) from Xenopus tropicalis (Western clawed frog).